The sequence spans 881 residues: DNA mismatch repair protein MutS (881 aa).

612 to 619 (GPNMAGKS) lines the ATP pocket.

The protein belongs to the DNA mismatch repair MutS family.

Its function is as follows. This protein is involved in the repair of mismatches in DNA. It is possible that it carries out the mismatch recognition step. This protein has a weak ATPase activity. The protein is DNA mismatch repair protein MutS of Clostridium tetani (strain Massachusetts / E88).